Reading from the N-terminus, the 214-residue chain is Probable chorismate pyruvate-lyase (214 aa).

Residues arginine 74, leucine 112, and glutamate 173 each coordinate substrate. The interval 183–214 (AAPENTGAGGTRLPRRIDTHHTPSKQEERPES) is disordered. Residues 197–214 (RRIDTHHTPSKQEERPES) show a composition bias toward basic and acidic residues.

It belongs to the UbiC family.

The protein localises to the cytoplasm. It catalyses the reaction chorismate = 4-hydroxybenzoate + pyruvate. It functions in the pathway cofactor biosynthesis; ubiquinone biosynthesis. Its function is as follows. Removes the pyruvyl group from chorismate, with concomitant aromatization of the ring, to provide 4-hydroxybenzoate (4HB) for the ubiquinone pathway. This chain is Probable chorismate pyruvate-lyase, found in Cupriavidus metallidurans (strain ATCC 43123 / DSM 2839 / NBRC 102507 / CH34) (Ralstonia metallidurans).